Here is an 87-residue protein sequence, read N- to C-terminus: Small ribosomal subunit protein bS20 (87 aa).

Positions 1-20 (MANHKSAEKRARQTIKRTER) are disordered.

It belongs to the bacterial ribosomal protein bS20 family.

Its function is as follows. Binds directly to 16S ribosomal RNA. This chain is Small ribosomal subunit protein bS20, found in Campylobacter lari (strain RM2100 / D67 / ATCC BAA-1060).